Consider the following 20-residue polypeptide: Unknown protein NF015 from 2D-PAGE (20 aa).

The tract at residues T1 to E20 is disordered.

In Naegleria fowleri (Brain eating amoeba), this protein is Unknown protein NF015 from 2D-PAGE.